Reading from the N-terminus, the 369-residue chain is Putative esterase slr0264 (369 aa).

Catalysis depends on charge relay system residues serine 162, aspartate 303, and histidine 334.

The protein belongs to the AB hydrolase superfamily. AB hydrolase 4 family.

This is Putative esterase slr0264 from Synechocystis sp. (strain ATCC 27184 / PCC 6803 / Kazusa).